The sequence spans 394 residues: Venom metalloproteinase antarease-like TtrivMP_A (394 aa).

The first 16 residues, 1–16 (MISYLASIFLLATVSA), serve as a signal peptide directing secretion. Residues 17–158 (VPSGRVEVVF…AENVSRMAEE (142 aa)) constitute a propeptide that is removed on maturation. Residue N151 is glycosylated (N-linked (GlcNAc...) asparagine). The Peptidase M12B domain occupies 162 to 390 (IVVEYYIVTD…KPTAFCIFEQ (229 aa)). An intrachain disulfide couples C295 to C386. A Zn(2+)-binding site is contributed by H319. E320 is an active-site residue. Zn(2+)-binding residues include H323 and H329.

This sequence belongs to the venom metalloproteinase (M12B) family. Zn(2+) serves as cofactor. As to expression, expressed by the venom gland.

The protein resides in the secreted. Its activity is regulated as follows. Inhibited by EDTA. Acts as a metalloprotease. Penetrates intact tissue and specifically cleaves the vesicle-associated membrane protein 2 (VAMP2) (part of the SNARE complex) involved in pancreatic secretion, thus disrupting the normal vesicular traffic. The polypeptide is Venom metalloproteinase antarease-like TtrivMP_A (Tityus trivittatus (Argentinean scorpion)).